The primary structure comprises 217 residues: Elongation factor Ts (217 aa).

The tract at residues 82–85 (TDFV) is involved in Mg(2+) ion dislocation from EF-Tu.

It belongs to the EF-Ts family.

It is found in the cytoplasm. Its function is as follows. Associates with the EF-Tu.GDP complex and induces the exchange of GDP to GTP. It remains bound to the aminoacyl-tRNA.EF-Tu.GTP complex up to the GTP hydrolysis stage on the ribosome. This is Elongation factor Ts from Synechococcus sp. (strain RCC307).